The following is a 651-amino-acid chain: Bromodomain-containing protein 7 (651 aa).

K21 is covalently cross-linked (Glycyl lysine isopeptide (Lys-Gly) (interchain with G-Cter in SUMO2)). A disordered region spans residues 34-103; sequence VTELSTGSSG…RDRAENEVDR (70 aa). Positions 35-45 are enriched in polar residues; that stretch reads TELSTGSSGHD. A compositionally biased stretch (basic and acidic residues) spans 47 to 57; that stretch reads SLFEDRSDHDK. Residues 58–69 show a composition bias toward basic residues; that stretch reads HKDRKRKKRKKG. The short motif at 65-96 is the Nuclear localization signal element; it reads KRKKGEKQAPGEEKGRKRRRVKEDKKKRDRDR. A compositionally biased stretch (basic and acidic residues) spans 70 to 103; the sequence is EKQAPGEEKGRKRRRVKEDKKKRDRDRAENEVDR. Glycyl lysine isopeptide (Lys-Gly) (interchain with G-Cter in SUMO2) cross-links involve residues K127, K186, K197, K201, K212, and K241. The 105-residue stretch at 131-235 folds into the Bromo domain; the sequence is VEQTPLQEAL…HSGMKILSQE (105 aa). Positions 252–316 are disordered; the sequence is KTRKQKERTD…RSSNSEREHE (65 aa). S279 and S289 each carry phosphoserine. A compositionally biased stretch (basic and acidic residues) spans 290–316; it reads PAKDNKRKDKDVLEDKWRSSNSEREHE. K305 participates in a covalent cross-link: Glycyl lysine isopeptide (Lys-Gly) (interchain with G-Cter in SUMO2). K328 bears the N6-acetyllysine mark. K344 participates in a covalent cross-link: Glycyl lysine isopeptide (Lys-Gly) (interchain with G-Cter in SUMO2). At S380 the chain carries Phosphoserine. K389 participates in a covalent cross-link: Glycyl lysine isopeptide (Lys-Gly) (interchain with G-Cter in SUMO2). A phosphoserine mark is found at S475, S482, and S483. A coiled-coil region spans residues 536–567; the sequence is SEEAEVFQRKLDETTRLLRELQEAQNERLSTR. Phosphoserine is present on S621.

In terms of assembly, interacts with IRF2 and HNRPUL1. Interacts (via N-terminus) with TP53. Interacts (via C-terminus) with EP300. Interacts with BRCA1. Interacts (via bromo domain) with histone H3 (via N-terminus) acetylated at 'Lys-14' (H3K14ac). Has low affinity for histone H3 acetylated at 'Lys-9' (H3K9ac). Has the highest affinity for histone H3 that is acetylated both at 'Lys-9' (H3K9ac) and at 'Lys-14' (H3K14ac). Has very low affinity for non-acetylated histone H3. Interacts (via bromo domain) with histone H4 (via N-terminus) acetylated at 'Lys-8' (H3K8ac) (in vitro). Interacts with TRIM24, PTPN13 and DVL1. Identified in a complex with SMARCA4/BRG1, SMARCC1/BAF155, SMARCE1/BAF57, DPF2/BAF45D and ARID2, subunits of the SWI/SNF-B (PBAF) chromatin remodeling complex. As to expression, ubiquitous.

Its subcellular location is the nucleus. The protein localises to the chromosome. Functionally, acts both as coactivator and as corepressor. May play a role in chromatin remodeling. Transcriptional corepressor that down-regulates the expression of target genes. Binds to target promoters, leading to increased histone H3 acetylation at 'Lys-9' (H3K9ac). Binds to the ESR1 promoter. Recruits BRCA1 and POU2F1 to the ESR1 promoter. Coactivator for TP53-mediated activation of transcription of a set of target genes. Required for TP53-mediated cell-cycle arrest in response to oncogene activation. Promotes acetylation of TP53 at 'Lys-382', and thereby promotes efficient recruitment of TP53 to target promoters. Inhibits cell cycle progression from G1 to S phase. Activator of the Wnt signaling pathway in a DVL1-dependent manner by negatively regulating the GSK3B phosphotransferase activity. Induces dephosphorylation of GSK3B at 'Tyr-216'. Down-regulates TRIM24-mediated activation of transcriptional activation by AR. This is Bromodomain-containing protein 7 (Brd7) from Mus musculus (Mouse).